A 267-amino-acid polypeptide reads, in one-letter code: Tryptophan synthase alpha chain (267 aa).

Residues glutamate 47 and aspartate 58 each act as proton acceptor in the active site.

This sequence belongs to the TrpA family. In terms of assembly, tetramer of two alpha and two beta chains.

The enzyme catalyses (1S,2R)-1-C-(indol-3-yl)glycerol 3-phosphate + L-serine = D-glyceraldehyde 3-phosphate + L-tryptophan + H2O. The protein operates within amino-acid biosynthesis; L-tryptophan biosynthesis; L-tryptophan from chorismate: step 5/5. Functionally, the alpha subunit is responsible for the aldol cleavage of indoleglycerol phosphate to indole and glyceraldehyde 3-phosphate. The protein is Tryptophan synthase alpha chain of Chlorobium phaeobacteroides (strain DSM 266 / SMG 266 / 2430).